A 216-amino-acid chain; its full sequence is Nucleoside triphosphate pyrophosphatase (216 aa).

Residue D86 is the Proton acceptor of the active site.

This sequence belongs to the Maf family. Requires a divalent metal cation as cofactor.

The protein localises to the cytoplasm. It catalyses the reaction a ribonucleoside 5'-triphosphate + H2O = a ribonucleoside 5'-phosphate + diphosphate + H(+). The catalysed reaction is a 2'-deoxyribonucleoside 5'-triphosphate + H2O = a 2'-deoxyribonucleoside 5'-phosphate + diphosphate + H(+). Functionally, nucleoside triphosphate pyrophosphatase. May have a dual role in cell division arrest and in preventing the incorporation of modified nucleotides into cellular nucleic acids. The sequence is that of Nucleoside triphosphate pyrophosphatase from Dictyostelium discoideum (Social amoeba).